Consider the following 955-residue polypeptide: Glycine dehydrogenase (decarboxylating) (955 aa).

The residue at position 702 (lysine 702) is an N6-(pyridoxal phosphate)lysine.

It belongs to the GcvP family. In terms of assembly, the glycine cleavage system is composed of four proteins: P, T, L and H. Pyridoxal 5'-phosphate serves as cofactor.

It catalyses the reaction N(6)-[(R)-lipoyl]-L-lysyl-[glycine-cleavage complex H protein] + glycine + H(+) = N(6)-[(R)-S(8)-aminomethyldihydrolipoyl]-L-lysyl-[glycine-cleavage complex H protein] + CO2. In terms of biological role, the glycine cleavage system catalyzes the degradation of glycine. The P protein binds the alpha-amino group of glycine through its pyridoxal phosphate cofactor; CO(2) is released and the remaining methylamine moiety is then transferred to the lipoamide cofactor of the H protein. In Stenotrophomonas maltophilia (strain R551-3), this protein is Glycine dehydrogenase (decarboxylating).